We begin with the raw amino-acid sequence, 207 residues long: ATP-dependent Clp protease proteolytic subunit (207 aa).

Ser-111 serves as the catalytic Nucleophile. Residue His-136 is part of the active site.

The protein belongs to the peptidase S14 family. Fourteen ClpP subunits assemble into 2 heptameric rings which stack back to back to give a disk-like structure with a central cavity, resembling the structure of eukaryotic proteasomes.

The protein resides in the cytoplasm. It catalyses the reaction Hydrolysis of proteins to small peptides in the presence of ATP and magnesium. alpha-casein is the usual test substrate. In the absence of ATP, only oligopeptides shorter than five residues are hydrolyzed (such as succinyl-Leu-Tyr-|-NHMec, and Leu-Tyr-Leu-|-Tyr-Trp, in which cleavage of the -Tyr-|-Leu- and -Tyr-|-Trp bonds also occurs).. Its function is as follows. Cleaves peptides in various proteins in a process that requires ATP hydrolysis. Has a chymotrypsin-like activity. Plays a major role in the degradation of misfolded proteins. This chain is ATP-dependent Clp protease proteolytic subunit, found in Photorhabdus laumondii subsp. laumondii (strain DSM 15139 / CIP 105565 / TT01) (Photorhabdus luminescens subsp. laumondii).